An 84-amino-acid polypeptide reads, in one-letter code: U2-theraphotoxin-Cg1b 2 (84 aa).

The N-terminal stretch at 1 to 21 is a signal peptide; it reads MKVSVLITLAVLGVMFLLTSA. A propeptide spanning residues 22 to 48 is cleaved from the precursor; that stretch reads EERGSDQMDSPAWLKSMEIIFQSEERE. Disulfide bonds link Cys-49/Cys-63, Cys-56/Cys-68, and Cys-62/Cys-76.

This sequence belongs to the neurotoxin 10 (Hwtx-1) family. 06 (F4b) subfamily. As to expression, expressed by the venom gland.

Its subcellular location is the secreted. In terms of biological role, probable ion channel inhibitor. This chain is U2-theraphotoxin-Cg1b 2, found in Chilobrachys guangxiensis (Chinese earth tiger tarantula).